The following is a 208-amino-acid chain: Putative dioxygenase RBE_0329 (208 aa).

This sequence belongs to the intradiol ring-cleavage dioxygenase family.

The protein is Putative dioxygenase RBE_0329 of Rickettsia bellii (strain RML369-C).